The chain runs to 771 residues: Probable aconitate hydratase, mitochondrial (771 aa).

Residues glutamine 86 and 179–181 (DSH) each bind substrate. The [4Fe-4S] cluster site is built by cysteine 372, cysteine 435, and cysteine 438. Substrate is bound by residues arginine 461, arginine 466, arginine 594, and 657-658 (SR).

It belongs to the aconitase/IPM isomerase family. In terms of assembly, monomer. It depends on [4Fe-4S] cluster as a cofactor.

The protein localises to the mitochondrion. The enzyme catalyses citrate = D-threo-isocitrate. Its pathway is carbohydrate metabolism; tricarboxylic acid cycle; isocitrate from oxaloacetate: step 2/2. Its function is as follows. Catalyzes the isomerization of citrate to isocitrate via cis-aconitate. The protein is Probable aconitate hydratase, mitochondrial (aco2) of Dictyostelium discoideum (Social amoeba).